Reading from the N-terminus, the 343-residue chain is N-acetyl-gamma-glutamyl-phosphate reductase (343 aa).

Cysteine 146 is an active-site residue.

It belongs to the NAGSA dehydrogenase family. Type 1 subfamily.

The protein resides in the cytoplasm. The catalysed reaction is N-acetyl-L-glutamate 5-semialdehyde + phosphate + NADP(+) = N-acetyl-L-glutamyl 5-phosphate + NADPH + H(+). It functions in the pathway amino-acid biosynthesis; L-arginine biosynthesis; N(2)-acetyl-L-ornithine from L-glutamate: step 3/4. Catalyzes the NADPH-dependent reduction of N-acetyl-5-glutamyl phosphate to yield N-acetyl-L-glutamate 5-semialdehyde. The protein is N-acetyl-gamma-glutamyl-phosphate reductase of Paenarthrobacter aurescens (strain TC1).